We begin with the raw amino-acid sequence, 309 residues long: Probable nitrogen assimilation transcriptional activator (309 aa).

Positions 1-57 (MRLEQLQAALRVAETGSFQEAAQKVGCNQSTISRQVKGLEDELGIALFRRQGRMKLT) constitute an HTH lysR-type domain. The H-T-H motif DNA-binding region spans 18–37 (FQEAAQKVGCNQSTISRQVK).

The protein belongs to the LysR transcriptional regulatory family.

Its function is as follows. Seems to regulate utilization of fixed nitrogen by controlling the expression of a certain gene(s) involved in nitrogen metabolism. The chain is Probable nitrogen assimilation transcriptional activator (ntcB) from Synechococcus elongatus (strain ATCC 33912 / PCC 7942 / FACHB-805) (Anacystis nidulans R2).